The chain runs to 420 residues: Glycerol-3-phosphate dehydrogenase [NAD(+)] (420 aa).

NAD(+)-binding positions include 16–21 (GSGNWG), Phe48, and Phe119. Lys142 is a substrate binding site. Ala175 serves as a coordination point for NAD(+). A disordered region spans residues 190 to 217 (YDPPPMDNSRAPTPRSNSPANGNGIAPL). The span at 199–210 (RAPTPRSNSPAN) shows a compositional bias: polar residues. Lys278 acts as the Proton acceptor in catalysis. Arg344 and Gln373 together coordinate NAD(+). 344 to 345 (RN) is a substrate binding site.

Belongs to the NAD-dependent glycerol-3-phosphate dehydrogenase family.

The enzyme catalyses sn-glycerol 3-phosphate + NAD(+) = dihydroxyacetone phosphate + NADH + H(+). The protein is Glycerol-3-phosphate dehydrogenase [NAD(+)] of Colletotrichum gloeosporioides (Anthracnose fungus).